We begin with the raw amino-acid sequence, 400 residues long: Nicotinate phosphoribosyltransferase (400 aa).

Residue His220 is modified to Phosphohistidine; by autocatalysis.

It belongs to the NAPRTase family. In terms of processing, transiently phosphorylated on a His residue during the reaction cycle. Phosphorylation strongly increases the affinity for substrates and increases the rate of nicotinate D-ribonucleotide production. Dephosphorylation regenerates the low-affinity form of the enzyme, leading to product release.

The enzyme catalyses nicotinate + 5-phospho-alpha-D-ribose 1-diphosphate + ATP + H2O = nicotinate beta-D-ribonucleotide + ADP + phosphate + diphosphate. Its pathway is cofactor biosynthesis; NAD(+) biosynthesis; nicotinate D-ribonucleotide from nicotinate: step 1/1. Its function is as follows. Catalyzes the synthesis of beta-nicotinate D-ribonucleotide from nicotinate and 5-phospho-D-ribose 1-phosphate at the expense of ATP. This chain is Nicotinate phosphoribosyltransferase, found in Salmonella schwarzengrund (strain CVM19633).